A 363-amino-acid polypeptide reads, in one-letter code: Cytoplasmic envelopment protein 2 (363 aa).

Belongs to the herpesviridae cytoplasmic envelopment protein 2 family. In terms of assembly, interacts with cytoplasmic envelopment protein 3 and with the capsid.

The protein resides in the virion tegument. It is found in the host cytoplasm. Its subcellular location is the host nucleus. Plays a critical role in cytoplasmic virus egress. Participates in the final step of tegumentation and envelope acquisition within the host cytoplasm by directly interacting with the capsid. Upon virion binding to target cell, a signaling cascade is triggered to disrupt the interaction with the capsid, thereby preparing capsid uncoating. In Varicella-zoster virus (strain Dumas) (HHV-3), this protein is Cytoplasmic envelopment protein 2 (44).